Reading from the N-terminus, the 75-residue chain is Exodeoxyribonuclease 7 small subunit (75 aa).

Belongs to the XseB family. Heterooligomer composed of large and small subunits.

The protein resides in the cytoplasm. It catalyses the reaction Exonucleolytic cleavage in either 5'- to 3'- or 3'- to 5'-direction to yield nucleoside 5'-phosphates.. In terms of biological role, bidirectionally degrades single-stranded DNA into large acid-insoluble oligonucleotides, which are then degraded further into small acid-soluble oligonucleotides. This chain is Exodeoxyribonuclease 7 small subunit, found in Chlamydia felis (strain Fe/C-56) (Chlamydophila felis).